Reading from the N-terminus, the 664-residue chain is Probable urea active transporter 1 (664 aa).

A run of 16 helical transmembrane segments spans residues 9–29 (SVGYGIVVGLGLGFAALMIFV), 56–76 (GLVASAVVSSWTWASTLLTSA), 86–106 (GAFWYASGACVQILLFTVLAI), 132–152 (GVFLVFAYITNILVMAMLLCG), 165–185 (TVAVCFLLPVGVIIYTMFGGI), 189–209 (FLTDYIHTVIILVILIMFSLA), 252–272 (GAIFFIINLAGNFGTVFVDNG), 290–310 (ILGGLAWFAIPWLAATTMGLV), 327–347 (MSDLEVSEGLVLPYAAIALMG), 353–373 (ATLLLVFMAVTSAASAELIAV), 395–415 (LLYTGHASLIVFGFAMSGFAT), 428–448 (YLLMGVLVCPAVVPATCVMLF), 454–474 (IAVTVSPVLGIISSIITWLVV), 496–516 (AGNVVGLLSPALYILILSIIF), 555–575 (VAALIITAAFIILWPWPMYGT), and 587–607 (WVVVGLIWIFFTVFAVGIFPL).

This sequence belongs to the sodium:solute symporter (SSF) (TC 2.A.21) family.

The protein resides in the membrane. Involved in active transport of urea. This Schizosaccharomyces pombe (strain 972 / ATCC 24843) (Fission yeast) protein is Probable urea active transporter 1 (dur3-1).